A 194-amino-acid chain; its full sequence is Holliday junction branch migration complex subunit RuvA (194 aa).

The interval 1-63 is domain I; that stretch reads MFEYLYGTVE…EDTYKLIGFL (63 aa). The interval 64–142 is domain II; that stretch reads DERDRKIFEL…NLTYTEEETV (79 aa). Positions 143–147 are flexible linker; the sequence is SMDML. The interval 147–194 is domain III; it reads LEDLVLALEGLGYNKKEIDKTLEKIDLNKFSSLEDAIKGILKNMRIGD.

Belongs to the RuvA family. As to quaternary structure, homotetramer. Forms an RuvA(8)-RuvB(12)-Holliday junction (HJ) complex. HJ DNA is sandwiched between 2 RuvA tetramers; dsDNA enters through RuvA and exits via RuvB. An RuvB hexamer assembles on each DNA strand where it exits the tetramer. Each RuvB hexamer is contacted by two RuvA subunits (via domain III) on 2 adjacent RuvB subunits; this complex drives branch migration. In the full resolvosome a probable DNA-RuvA(4)-RuvB(12)-RuvC(2) complex forms which resolves the HJ.

It is found in the cytoplasm. In terms of biological role, the RuvA-RuvB-RuvC complex processes Holliday junction (HJ) DNA during genetic recombination and DNA repair, while the RuvA-RuvB complex plays an important role in the rescue of blocked DNA replication forks via replication fork reversal (RFR). RuvA specifically binds to HJ cruciform DNA, conferring on it an open structure. The RuvB hexamer acts as an ATP-dependent pump, pulling dsDNA into and through the RuvAB complex. HJ branch migration allows RuvC to scan DNA until it finds its consensus sequence, where it cleaves and resolves the cruciform DNA. The polypeptide is Holliday junction branch migration complex subunit RuvA (Fusobacterium nucleatum subsp. nucleatum (strain ATCC 25586 / DSM 15643 / BCRC 10681 / CIP 101130 / JCM 8532 / KCTC 2640 / LMG 13131 / VPI 4355)).